The sequence spans 269 residues: MQPQIILITGASSGFGKITAQMLSEQGHIVYGTSRKPSENIGKVRMLVVDVTNSISVRQAVEQIISEQGRMDVLINNAGMGIGGALELATEEEVSMQMNTNFFGVVNMCKAVLPYMRKARRGKIINISSIGGVMGIPYQGFYSASKFAVEGYSEALALEVHPFHIKVCLVQPGDFNTGFTDNRNISELTGQNEDYADSFLRSLKIIEKEERNGCHPRKLGAAICKIVARKNPPFRTKVGPLVQVLFAKSKSWLPDNMMQYALRIFYAIR.

Residues G10, S12, S13, G14, K36, and D50 each coordinate NADPH. The short motif at 10–14 is the GXSXG element; that stretch reads GASSG. Catalysis depends on S12, which acts as the Nucleophile; for lipase activity. S128 functions as the Proton donor in the catalytic mechanism. Y142 serves as the catalytic Proton acceptor. Residues Y142 and K146 each contribute to the NADP(+) site. Residues 142 to 146 and 175 to 177 contribute to the NADPH site; these read YSASK and FNT. K146 is an active-site residue. K146 (lowers pKa of active site Tyr) is an active-site residue.

It belongs to the short-chain dehydrogenases/reductases (SDR) family.

It catalyses the reaction sphinganine + NADP(+) = 3-oxosphinganine + NADPH + H(+). Its pathway is lipid metabolism; sphingolipid metabolism. Functionally, catalyzes the reduction of 3'-oxosphinganine (3-ketodihydrosphingosine/KDS) to sphinganine (dihydrosphingosine/DHS), the second step of de novo sphingolipid biosynthesis. The protein is 3-ketodihydrosphingosine reductase of Bacteroides thetaiotaomicron (strain ATCC 29148 / DSM 2079 / JCM 5827 / CCUG 10774 / NCTC 10582 / VPI-5482 / E50).